The primary structure comprises 480 residues: Glycerol 3-phosphate dehydrogenase (480 aa).

Residues I12, E31, 40–41 (TT), and 45–47 (SAI) each bind FAD. Positions 45 and 49 each coordinate sn-glycerol 3-phosphate. Catalysis depends on H49, which acts as the Proton acceptor. An FAD-binding site is contributed by V172. The sn-glycerol 3-phosphate site is built by K249 and R310. 335–336 (IE) lines the FAD pocket. A sn-glycerol 3-phosphate-binding site is contributed by S337. S341 provides a ligand contact to FAD. The [2Fe-2S] cluster site is built by C400, C402, C437, and C442.

It depends on [2Fe-2S] cluster as a cofactor.

The catalysed reaction is sn-glycerol 3-phosphate + A = dihydroxyacetone phosphate + AH2. It functions in the pathway polyol metabolism; glycerol degradation via glycerol kinase pathway; glycerone phosphate from sn-glycerol 3-phosphate (aerobic route): step 1/1. Functionally, catalyzes the dehydrogenation of glycerol 3-phosphate to dihydroxyacetone phosphate. Is probably involved in anaerobic glycerol metabolism. Active in vitro with the artificial electron acceptor 2,6-dichlorophenolindophenol (DCPIP), but not with NAD or NADP. Also displays a very low oxidase activity in vitro on glycerol 3-phosphate with O2 as the electron acceptor, but this activity is most likely not physiological. The chain is Glycerol 3-phosphate dehydrogenase from Caloramator mitchellensis.